We begin with the raw amino-acid sequence, 458 residues long: Enolase (458 aa).

Gln177 lines the (2R)-2-phosphoglycerate pocket. Glu219 acts as the Proton donor in catalysis. Mg(2+) is bound by residues Asp256, Glu310, and Asp337. The (2R)-2-phosphoglycerate site is built by Lys362, Arg391, Ser392, and Lys413. Lys362 (proton acceptor) is an active-site residue.

This sequence belongs to the enolase family. Mg(2+) serves as cofactor.

It localises to the cytoplasm. The protein resides in the secreted. The protein localises to the cell surface. The catalysed reaction is (2R)-2-phosphoglycerate = phosphoenolpyruvate + H2O. It functions in the pathway carbohydrate degradation; glycolysis; pyruvate from D-glyceraldehyde 3-phosphate: step 4/5. Catalyzes the reversible conversion of 2-phosphoglycerate (2-PG) into phosphoenolpyruvate (PEP). It is essential for the degradation of carbohydrates via glycolysis. This is Enolase from Mycoplasma genitalium (strain ATCC 33530 / DSM 19775 / NCTC 10195 / G37) (Mycoplasmoides genitalium).